The primary structure comprises 298 residues: Probable protein phosphatase 2C 26 (298 aa).

The 248-residue stretch at S48 to V295 folds into the PPM-type phosphatase domain. Mn(2+) contacts are provided by D82, G83, D213, and D286.

Belongs to the PP2C family. The cofactor is Mg(2+). Mn(2+) serves as cofactor.

It catalyses the reaction O-phospho-L-seryl-[protein] + H2O = L-seryl-[protein] + phosphate. The catalysed reaction is O-phospho-L-threonyl-[protein] + H2O = L-threonyl-[protein] + phosphate. The chain is Probable protein phosphatase 2C 26 from Arabidopsis thaliana (Mouse-ear cress).